A 113-amino-acid chain; its full sequence is UPF0212 protein AF_0282 (113 aa).

The protein belongs to the UPF0212 family.

The sequence is that of UPF0212 protein AF_0282 from Archaeoglobus fulgidus (strain ATCC 49558 / DSM 4304 / JCM 9628 / NBRC 100126 / VC-16).